A 701-amino-acid chain; its full sequence is Polyribonucleotide nucleotidyltransferase (701 aa).

Mg(2+)-binding residues include Asp-487 and Asp-493. The region spanning 554 to 613 (PTMIAMKIDTDKIRDVIGKGGATIRAICEETKASIDIEDDGSIKIFGETKEAAEAARQRV) is the KH domain. One can recognise an S1 motif domain in the interval 623–691 (GKIYVGKVER…NRGRIKLSIK (69 aa)).

It belongs to the polyribonucleotide nucleotidyltransferase family. As to quaternary structure, component of the RNA degradosome, which is a multiprotein complex involved in RNA processing and mRNA degradation. It depends on Mg(2+) as a cofactor.

It is found in the cytoplasm. It carries out the reaction RNA(n+1) + phosphate = RNA(n) + a ribonucleoside 5'-diphosphate. In terms of biological role, involved in mRNA degradation. Catalyzes the phosphorolysis of single-stranded polyribonucleotides processively in the 3'- to 5'-direction. This is Polyribonucleotide nucleotidyltransferase from Pseudomonas fluorescens (strain SBW25).